A 397-amino-acid polypeptide reads, in one-letter code: Transcription factor TGAL6 (397 aa).

The region spanning Pro-104–Arg-148 is the bZIP domain. Positions Lys-106–Lys-126 are basic motif. The segment at Leu-132–Leu-146 is leucine-zipper. Residues Ala-175–Arg-390 enclose the DOG1 domain.

Belongs to the bZIP family.

The protein localises to the nucleus. Functionally, transcriptional regulator involved in defense response. This is Transcription factor TGAL6 from Oryza sativa subsp. japonica (Rice).